The primary structure comprises 373 residues: Alanine racemase (373 aa).

Lysine 40 serves as the catalytic Proton acceptor; specific for D-alanine. Lysine 40 carries the N6-(pyridoxal phosphate)lysine modification. Arginine 140 provides a ligand contact to substrate. Tyrosine 268 functions as the Proton acceptor; specific for L-alanine in the catalytic mechanism. Methionine 315 lines the substrate pocket.

Belongs to the alanine racemase family. The cofactor is pyridoxal 5'-phosphate.

It carries out the reaction L-alanine = D-alanine. Its pathway is amino-acid biosynthesis; D-alanine biosynthesis; D-alanine from L-alanine: step 1/1. Functionally, catalyzes the interconversion of L-alanine and D-alanine. May also act on other amino acids. This is Alanine racemase (alr) from Levilactobacillus brevis (strain ATCC 367 / BCRC 12310 / CIP 105137 / JCM 1170 / LMG 11437 / NCIMB 947 / NCTC 947) (Lactobacillus brevis).